The following is a 439-amino-acid chain: Dolichyl-diphosphooligosaccharide--protein glycosyltransferase 48 kDa subunit (439 aa).

The N-terminal stretch at 1–25 (MELGAAARAWSLLWLLLPLLGLVGA) is a signal peptide. Over 27 to 410 (GPRTLVLLDN…YERFIPSAYP (384 aa)) the chain is Lumenal. A helical transmembrane segment spans residues 411–430 (YYASAFSMMVGLFIFSVVFL). Residues 431–439 (HMKEKEKSD) lie on the Cytoplasmic side of the membrane.

This sequence belongs to the DDOST 48 kDa subunit family. Component of the oligosaccharyltransferase (OST) complex. OST exists in two different complex forms which contain common core subunits RPN1, RPN2, OST48, OST4, DAD1 and TMEM258, either STT3A or STT3B as catalytic subunits, and form-specific accessory subunits. STT3A complex assembly occurs through the formation of 3 subcomplexes. Subcomplex 1 contains RPN1 and TMEM258, subcomplex 2 contains the STT3A-specific subunits STT3A, DC2/OSTC, and KCP2 as well as the core subunit OST4, and subcomplex 3 contains RPN2, DAD1, and OST48. The STT3A complex can form stable complexes with the Sec61 complex or with both the Sec61 and TRAP complexes. Interacts with SMIM22.

It localises to the endoplasmic reticulum membrane. It functions in the pathway protein modification; protein glycosylation. Functionally, subunit of the oligosaccharyl transferase (OST) complex that catalyzes the initial transfer of a defined glycan (Glc(3)Man(9)GlcNAc(2) in eukaryotes) from the lipid carrier dolichol-pyrophosphate to an asparagine residue within an Asn-X-Ser/Thr consensus motif in nascent polypeptide chains, the first step in protein N-glycosylation. N-glycosylation occurs cotranslationally and the complex associates with the Sec61 complex at the channel-forming translocon complex that mediates protein translocation across the endoplasmic reticulum (ER). All subunits are required for a maximal enzyme activity. Required for the assembly of both SST3A- and SS3B-containing OST complexes. In Sus scrofa (Pig), this protein is Dolichyl-diphosphooligosaccharide--protein glycosyltransferase 48 kDa subunit.